The primary structure comprises 71 residues: Antitoxin VapB22 (71 aa).

The protein belongs to the phD/YefM antitoxin family.

Its function is as follows. Antitoxin component of a type II toxin-antitoxin (TA) system. Upon expression in M.smegmatis neutralizes the effect of cognate toxin VapC22. This chain is Antitoxin VapB22 (vapB22), found in Mycobacterium tuberculosis (strain ATCC 25618 / H37Rv).